We begin with the raw amino-acid sequence, 290 residues long: Probable transcriptional regulatory protein HAH1 (290 aa).

It belongs to the TACO1 family.

It is found in the mitochondrion. The protein is Probable transcriptional regulatory protein HAH1 of Saccharomyces cerevisiae (strain ATCC 204508 / S288c) (Baker's yeast).